The primary structure comprises 891 residues: MMLIKNIVTLDQLESSDYLYKLISSVLPSLCLDYKIDPKLANGYVHALDTIYSPELISILTDGERSQQLDTLGINYILSRKNDLGIYFPINIRENGEIVSTWNKNTGGYTNPIPCTISFNDLPPFTKILIQIRTMGCEAHARYFGGYVEHPSSPNILSPKINPNISFANSYIHSLTYPYIEGRADYSTYRPLLINGIMEKKDLANLLNVRALLEPMSRAIFDAIFKIQFHCNANNIVLVQNPNIDTDLITMQTLKYLVMYFQHFSGFTLRDIYLGGVRIRVDNSMLASYVVSIYFSKEIKYIEDNKLFSLDYIDQFVFRPDNSNLNITVTAQQLGIRILNMTSNRPYIINLLNIVSKSLVRHRNVPKEISLFWDGMSYDEYKNMKFIDMMFLGTTCYLFALYNKNGITYCSMLNDVLRAEETPIRICVFPRILKGKTIPTLIREILENINNISVRDFPKYDTHDVKHIGLSDAGFMLFFQFLRLMENKEPHIAVKEILMAYTGIKIDDKGSPYYITPESYRTFIFMLFKAMGFNVRVNRTTISSHSYTSYYVSPRVSKRYLTNMLQKASCSQSEAEKLLSSAHDLVSFMLSVNNSSNRDSYRRINRSFFGGFKESASEEDATLVQFISPVNILDRINVKGILSANALNEIMDTDVFLPENANFKENLKQLLKEDTIDGKSIAHIIPLNTIDRLIVSAGGVSVGELLENLDERVPDENATNEVIELITNALKDRNMKDSNFIATNILNSITQISEKQMDGIKKITCHGTMMFKELAMHIYFTERYFKAKISDDVKISILEKYRDFIELSKSLYKDLIGIDQIKSVLSIVHRTGRNIDDNPITQEDIQKAYNIARPKILKLTNYYTEMTKSYFENIKRIMNPEDANAVVFDNE.

It belongs to the poxviridae protein P4a family. As to quaternary structure, interacts with P39/A4.

The protein localises to the virion. Its function is as follows. Core protein 4a is the most abundant virion protein. Major component of the virion core that undergoes proteolytic processing during the immature virion (IV) to mature virion (MV) transition. The polypeptide is Major core protein 4a precursor (Fowlpox virus (strain NVSL) (FPV)).